We begin with the raw amino-acid sequence, 568 residues long: Potassium-transporting ATPase potassium-binding subunit (568 aa).

Transmembrane regions (helical) follow at residues 7 to 27, 67 to 87, 137 to 157, 180 to 200, 258 to 278, 288 to 308, 332 to 352, 361 to 381, 384 to 404, 421 to 441, 488 to 508, and 535 to 555; these read LLITSFLLILMLLAKPLGNII, YALAITIFNLTGLLLLFTLLV, GLTVQNFLSAATGIAVAFALI, LYLLLPLSMVIALVFVSQGVI, FIQILSIFLIPCALCFAFGQV, LLWAMSIIFVIATVGVMYAEL, FGILATSIYAVVTTAASCGAV, ALGGMIPMWLIQIGEVVFGGV, GLYGMLLFVLLTVFIAGLMIG, MVALAILVTPTLALLGTALTI, LLLAIILFLGRFGMILPVLAI, and LLILTIMLIGALTFIPALILG.

It belongs to the KdpA family. The system is composed of three essential subunits: KdpA, KdpB and KdpC.

The protein localises to the cell inner membrane. In terms of biological role, part of the high-affinity ATP-driven potassium transport (or Kdp) system, which catalyzes the hydrolysis of ATP coupled with the electrogenic transport of potassium into the cytoplasm. This subunit binds the periplasmic potassium ions and delivers the ions to the membrane domain of KdpB through an intramembrane tunnel. This is Potassium-transporting ATPase potassium-binding subunit from Photorhabdus laumondii subsp. laumondii (strain DSM 15139 / CIP 105565 / TT01) (Photorhabdus luminescens subsp. laumondii).